The chain runs to 134 residues: MGAQKTIAYLAIIAIAVIFAQVNTAPPVGHYAANNTNKSHNLVVGYRMPGDRLVLRQSVIKNSSWGRIVVEERTFNVSSWERITMIQALDQKTNGNGAYASITNGGPGNQNVTIRLKSQRGHGINFVIEIYSRY.

Residues 1-24 (MGAQKTIAYLAIIAIAVIFAQVNT) form the signal peptide.

It localises to the secreted. The polypeptide is Probable salivary secreted peptide (Bombus ignitus (Bumblebee)).